The sequence spans 335 residues: Nucleoid-associated protein KPN78578_25800 (335 aa).

The protein belongs to the YejK family.

It localises to the cytoplasm. The protein resides in the nucleoid. The sequence is that of Nucleoid-associated protein KPN78578_25800 from Klebsiella pneumoniae subsp. pneumoniae (strain ATCC 700721 / MGH 78578).